Here is a 368-residue protein sequence, read N- to C-terminus: E3 ubiquitin-protein ligase makorin (368 aa).

2 consecutive C3H1-type zinc fingers follow at residues Ser-2 to Asn-29 and Asp-30 to Val-57. The segment at Ser-58 to Pro-81 is disordered. Over residues Ser-69–Ser-78 the composition is skewed to low complexity. The segment at Pro-147 to Leu-174 adopts a C3H1-type 3 zinc-finger fold. Positions Cys-175 to His-202 are makorin-type Cys-His. The RING-type zinc-finger motif lies at Cys-216 to Arg-274. The C3H1-type 4 zinc finger occupies Lys-303–Arg-332.

In terms of tissue distribution, expressed in primary roots and leaves. Detected in vascular bundle tissues.

It carries out the reaction S-ubiquitinyl-[E2 ubiquitin-conjugating enzyme]-L-cysteine + [acceptor protein]-L-lysine = [E2 ubiquitin-conjugating enzyme]-L-cysteine + N(6)-ubiquitinyl-[acceptor protein]-L-lysine.. Its pathway is protein modification; protein ubiquitination. Its function is as follows. E3 ubiquitin ligase catalyzing the covalent attachment of ubiquitin moieties onto substrate proteins. This Oryza sativa subsp. japonica (Rice) protein is E3 ubiquitin-protein ligase makorin (MKRN).